The chain runs to 72 residues: Gene 83 protein (72 aa).

In Mycobacterium phage L5 (Mycobacteriophage L5), this protein is Gene 83 protein (83).